We begin with the raw amino-acid sequence, 547 residues long: Vacuolar fusion protein MON1 homolog B (547 aa).

The residue at position 1 (methionine 1) is an N-acetylmethionine. The interval 1–106 is disordered; sequence MEAGGDTAAP…GGDPSDEEWR (106 aa). Positions 57–66 are enriched in pro residues; that stretch reads PPSPSPPPQS. A phosphoserine mark is found at serine 59 and serine 61.

Belongs to the MON1/SAND family. Interacts with CCNT2; down-regulates CCNT2-mediated activation of viral promoters during herpes simplex virus 1/HHV-1 infection. Found in a complex with RMC1, CCZ1 MON1A and MON1B.

The chain is Vacuolar fusion protein MON1 homolog B (MON1B) from Macaca fascicularis (Crab-eating macaque).